Consider the following 44-residue polypeptide: Conotoxin S5.1 (44 aa).

Post-translationally, contains 3 disulfide bonds. As to expression, expressed by the venom duct.

Its subcellular location is the secreted. The protein is Conotoxin S5.1 of Conus striatus (Striated cone).